The primary structure comprises 103 residues: Large ribosomal subunit protein bL21 (103 aa).

The protein belongs to the bacterial ribosomal protein bL21 family. In terms of assembly, part of the 50S ribosomal subunit. Contacts protein L20.

This protein binds to 23S rRNA in the presence of protein L20. This is Large ribosomal subunit protein bL21 from Lactobacillus helveticus (strain DPC 4571).